Consider the following 248-residue polypeptide: Protein maestro (248 aa).

The segment at 1–20 (MDQRQRRILGQPLSIPTSQP) is disordered. 2 HEAT repeats span residues 44-79 (EPLK…AREA) and 128-163 (SFFI…AAFA).

Its subcellular location is the nucleus. The protein localises to the nucleolus. The protein is Protein maestro (MRO) of Macaca fascicularis (Crab-eating macaque).